The chain runs to 51 residues: Ribosome biogenesis protein Nop10 (51 aa).

This sequence belongs to the NOP10 family.

Its function is as follows. Involved in ribosome biogenesis; more specifically in 18S rRNA pseudouridylation and in cleavage of pre-rRNA. In Methanococcus maripaludis (strain C7 / ATCC BAA-1331), this protein is Ribosome biogenesis protein Nop10.